The primary structure comprises 76 residues: Immune protein Tsi5 (76 aa).

The next 2 helical transmembrane spans lie at 19–39 and 43–63; these read LLMT…EWFF and WVTV…LYLY.

It is found in the membrane. Functionally, immunity protein that plays a role in preventing early activation of toxin Tse5. The chain is Immune protein Tsi5 from Pseudomonas aeruginosa (strain ATCC 15692 / DSM 22644 / CIP 104116 / JCM 14847 / LMG 12228 / 1C / PRS 101 / PAO1).